The following is a 366-amino-acid chain: Nodulation protein NolL (366 aa).

Helical transmembrane passes span 27 to 47, 62 to 82, 98 to 118, 140 to 160, 164 to 184, 212 to 232, 253 to 273, 286 to 306, and 324 to 344; these read FVKG…LVIY, IYMF…SGTI, LLIP…AAFF, FLWA…FNLL, ILCA…IVPL, HKSL…LDWG, VLLM…SLFH, LVAV…GAVF, and IVVA…VLWI.

The protein belongs to the acyltransferase 3 family.

It is found in the cell membrane. Its function is as follows. Thought to be an acetyltransferase that modifies the fucose of the nod factor. The polypeptide is Nodulation protein NolL (nolL) (Sinorhizobium fredii (strain NBRC 101917 / NGR234)).